The sequence spans 257 residues: Putative phosphatase YkrA (257 aa).

Catalysis depends on aspartate 9, which acts as the Nucleophile. Aspartate 9 is a Mg(2+) binding site. Isoleucine 10 lines the phosphate pocket. Aspartate 11 serves as a coordination point for Mg(2+). Phosphate contacts are provided by residues 43 to 44 and lysine 183; that span reads SG. Aspartate 206 contributes to the Mg(2+) binding site. Asparagine 209 contacts phosphate.

Belongs to the HAD-like hydrolase superfamily. Cof family. It depends on Mg(2+) as a cofactor.

This is Putative phosphatase YkrA (ykrA) from Bacillus subtilis (strain 168).